A 79-amino-acid chain; its full sequence is Cell division protein ZapB (79 aa).

A coiled-coil region spans residues 6–78 (FEKLEVKVQQ…LRALLGKMEE (73 aa)).

The protein belongs to the ZapB family. Homodimer. The ends of the coiled-coil dimer bind to each other, forming polymers. Interacts with FtsZ.

Its subcellular location is the cytoplasm. Non-essential, abundant cell division factor that is required for proper Z-ring formation. It is recruited early to the divisome by direct interaction with FtsZ, stimulating Z-ring assembly and thereby promoting cell division earlier in the cell cycle. Its recruitment to the Z-ring requires functional FtsA or ZipA. The protein is Cell division protein ZapB of Yersinia pseudotuberculosis serotype O:1b (strain IP 31758).